The sequence spans 398 residues: 1-deoxy-D-xylulose 5-phosphate reductoisomerase (398 aa).

The NADPH site is built by T10, G11, S12, I13, K37, N38, and N124. K125 lines the 1-deoxy-D-xylulose 5-phosphate pocket. E126 contributes to the NADPH binding site. D150 is a Mn(2+) binding site. Residues S151, E152, S186, and H209 each coordinate 1-deoxy-D-xylulose 5-phosphate. E152 contacts Mn(2+). G215 serves as a coordination point for NADPH. The 1-deoxy-D-xylulose 5-phosphate site is built by S222, N227, K228, and E231. E231 is a binding site for Mn(2+).

Belongs to the DXR family. Homodimer. It depends on Mg(2+) as a cofactor. Mn(2+) is required as a cofactor.

The catalysed reaction is 2-C-methyl-D-erythritol 4-phosphate + NADP(+) = 1-deoxy-D-xylulose 5-phosphate + NADPH + H(+). It participates in isoprenoid biosynthesis; isopentenyl diphosphate biosynthesis via DXP pathway; isopentenyl diphosphate from 1-deoxy-D-xylulose 5-phosphate: step 1/6. Its function is as follows. Catalyzes the NADPH-dependent rearrangement and reduction of 1-deoxy-D-xylulose-5-phosphate (DXP) to 2-C-methyl-D-erythritol 4-phosphate (MEP). The polypeptide is 1-deoxy-D-xylulose 5-phosphate reductoisomerase (Buchnera aphidicola subsp. Acyrthosiphon pisum (strain APS) (Acyrthosiphon pisum symbiotic bacterium)).